The primary structure comprises 1526 residues: High affinity cGMP-specific 3',5'-cyclic phosphodiesterase 9A (1526 aa).

Low complexity predominate over residues 1-43 (MYQDSGCSSSSSRRGSSSAAAATSTAATAAETAAAAAATTTSS). Disordered regions lie at residues 1–48 (MYQD…DEET), 266–348 (SSRS…SGTA), and 393–476 (RHHH…ASDC). Basic and acidic residues-rich tracts occupy residues 270-282 (RSSE…HEQD) and 305-314 (EHPSEKPERT). 2 stretches are compositionally biased toward low complexity: residues 324-348 (IAVT…SGTA) and 401-440 (QQHQ…ATAT). Positions 441 to 462 (PSVEQPATSGTTNIHLQPTSLP) are enriched in polar residues. The region spanning 664 to 985 (VKRRFLEICD…EYYRRLNDAQ (322 aa)) is the PDEase domain. The active-site Proton donor is H740. 740-744 (HNFRH) is a 3',5'-cyclic GMP binding site. H744, H780, D781, and D890 together coordinate Zn(2+). Positions 781 and 890 each coordinate 3',5'-cyclic GMP. A Mg(2+)-binding site is contributed by D781. Disordered regions lie at residues 986–1170 (TKTR…SSGG), 1265–1284 (TEAD…KKIP), 1314–1351 (SNGS…GSSW), 1372–1406 (RFGS…DGLG), and 1469–1496 (RYSS…LTTG). Low complexity predominate over residues 993–1005 (ADSNTSATSDSNS). Residues 1033-1057 (NSQGSGGGGGGGGGGGAGGGTGSGC) show a composition bias toward gly residues. Polar residues predominate over residues 1065-1093 (VSPQMPRSGSGISVKSRRSIPSQKSASRT). Basic and acidic residues predominate over residues 1125-1136 (VAEKTSKFKVDT). Low complexity predominate over residues 1139–1148 (SSNRSKSSHS). Positions 1314–1324 (SNGSTRSSASS) are enriched in low complexity. Over residues 1325–1340 (GRGGSGVPGGSGGSGM) the composition is skewed to gly residues. 2 stretches are compositionally biased toward low complexity: residues 1341-1350 (PGPSAGSGSS) and 1375-1397 (STRS…NANG). Polar residues predominate over residues 1470–1486 (YSSNDSSRHPSNNTLQS).

The protein belongs to the cyclic nucleotide phosphodiesterase family. PDE9 subfamily. The cofactor is Zn(2+). Mg(2+) is required as a cofactor. Expressed in Malpighian tubules and adult fly head.

The catalysed reaction is 3',5'-cyclic GMP + H2O = GMP + H(+). Its pathway is purine metabolism; 3',5'-cyclic GMP degradation; GMP from 3',5'-cyclic GMP: step 1/1. Its function is as follows. Specifically hydrolyzes the second messenger cGMP, which is a key regulator of many important physiological processes. Highly specific: compared to other members of the cyclic nucleotide phosphodiesterase family, has the highest affinity and selectivity for cGMP. This Drosophila melanogaster (Fruit fly) protein is High affinity cGMP-specific 3',5'-cyclic phosphodiesterase 9A.